We begin with the raw amino-acid sequence, 976 residues long: Vacuolar membrane protease (976 aa).

Topologically, residues 1–15 are cytoplasmic; that stretch reads MKLKSVFRSVLKYRK. The chain crosses the membrane as a helical span at residues 16–36; that stretch reads TNLSLLLLITYSIITLLYIFD. At 37–359 the chain is on the vacuolar side; that stretch reads HERYKLNLPK…KFFVISAKTL (323 aa). Asparagine 96 and asparagine 121 each carry an N-linked (GlcNAc...) asparagine glycan. Zn(2+) is bound by residues histidine 156 and aspartate 168. Asparagine 189 carries an N-linked (GlcNAc...) asparagine glycan. Catalysis depends on glutamate 200, which acts as the Proton acceptor. Glutamate 201 serves as a coordination point for Zn(2+). N-linked (GlcNAc...) asparagine glycosylation is found at asparagine 212 and asparagine 217. Glutamate 226 and histidine 300 together coordinate Zn(2+). Residues 360-380 traverse the membrane as a helical segment; the sequence is FYWNCIFLLVSPVVAIGLYLI. The Cytoplasmic portion of the chain corresponds to 381–392; that stretch reads SRDRMTWKSHSW. Residues 393–412 form a helical membrane-spanning segment; sequence LSWTRFPLSLAAGIIVQKLF. Residues 413–428 lie on the Vacuolar side of the membrane; it reads SNDIIRSNPLTFSRNY. The helical transmembrane segment at 429–449 threads the bilayer; the sequence is FWPISAFFTQVIFTSYVLINC. Over 450-461 the chain is Cytoplasmic; it reads SNFFFPCADMKS. The chain crosses the membrane as a helical span at residues 462-482; it reads LSIIELFIILWTILLFTSKLL. Residues 483-496 are Vacuolar-facing; that stretch reads YSSDYRYTGLYPLS. The chain crosses the membrane as a helical span at residues 497–517; it reads IFFLLSTIAAILRLLALALGM. Topologically, residues 518-627 are cytoplasmic; it reads RTRKRLGREC…NSLKLEYTDY (110 aa). Residues 528–610 form a disordered region; that stretch reads RDHHSNYSSH…PLLKGSNSME (83 aa). Residues 549–558 show a composition bias toward polar residues; the sequence is NLEQPQDQFT. Positions 559–570 are enriched in low complexity; that stretch reads SSQDDQASIQDD. Over residues 582–601 the composition is skewed to basic and acidic residues; it reads NVDEDHGMDSSSQQHDERVP. A helical transmembrane segment spans residues 628-648; sequence AWIIQFLLIVPIPSFILFNSV. Residues 649–668 are Vacuolar-facing; the sequence is DVIMDALNHTVQEGSKATFD. Residue asparagine 656 is glycosylated (N-linked (GlcNAc...) asparagine). A helical transmembrane segment spans residues 669–689; the sequence is VLRFGMVGSILIALPILPFFY. Residues 690 to 692 lie on the Cytoplasmic side of the membrane; it reads KVN. The helical transmembrane segment at 693–713 threads the bilayer; the sequence is YITISLTALLFLISASKTLLV. Residues 714–976 lie on the Vacuolar side of the membrane; that stretch reads HPFTNSNPLK…LVIVKDAIIL (263 aa). N-linked (GlcNAc...) asparagine glycosylation is found at asparagine 768, asparagine 796, asparagine 811, asparagine 866, and asparagine 937.

It belongs to the peptidase M28 family. Zn(2+) serves as cofactor.

The protein resides in the vacuole membrane. May be involved in vacuolar sorting and osmoregulation. The polypeptide is Vacuolar membrane protease (Saccharomyces cerevisiae (strain JAY291) (Baker's yeast)).